We begin with the raw amino-acid sequence, 204 residues long: Guanylate kinase (204 aa).

A Guanylate kinase-like domain is found at glycine 3 to threonine 181. Alanine 10–serine 17 is a binding site for ATP.

Belongs to the guanylate kinase family.

It is found in the cytoplasm. It catalyses the reaction GMP + ATP = GDP + ADP. In terms of biological role, essential for recycling GMP and indirectly, cGMP. This chain is Guanylate kinase (gmk), found in Xylella fastidiosa (strain 9a5c).